The primary structure comprises 152 residues: Ferredoxin-thioredoxin reductase catalytic chain, chloroplastic (152 aa).

The N-terminal 38 residues, 1-38 (MTSTVTTTVGCGGLPVRPLSTATRGRPRRCAVRAQAAG), are a transit peptide targeting the chloroplast. [4Fe-4S] cluster is bound at residue Cys91. Cys93 functions as the Nucleophile in the catalytic mechanism. Cysteines 93 and 123 form a disulfide. 3 residues coordinate [4Fe-4S] cluster: Cys110, Cys112, and Cys121.

It belongs to the ferredoxin thioredoxin reductase beta subunit family. As to quaternary structure, heterodimer of subunit A (variable subunit) and subunit B (catalytic subunit). Heterodimeric FTR forms a complex with ferredoxin and thioredoxin. The cofactor is [4Fe-4S] cluster.

The protein resides in the plastid. It localises to the chloroplast. It carries out the reaction [thioredoxin]-disulfide + 2 reduced [2Fe-2S]-[ferredoxin] + 2 H(+) = [thioredoxin]-dithiol + 2 oxidized [2Fe-2S]-[ferredoxin]. Catalytic subunit of the ferredoxin-thioredoxin reductase (FTR), which catalyzes the two-electron reduction of thioredoxins by the electrons provided by reduced ferredoxin. The polypeptide is Ferredoxin-thioredoxin reductase catalytic chain, chloroplastic (FTRC) (Zea mays (Maize)).